Consider the following 304-residue polypeptide: Quorum-quenching protein AidA (304 aa).

It belongs to the AB hydrolase superfamily.

In terms of biological role, involved in quorum quenching (QQ). Inhibits motility and biofilm formation. Could contribute in bacterial competition, as it is capable of hydrolyzing the signaling molecules that mediate interspecies communication. The chain is Quorum-quenching protein AidA from Acinetobacter baumannii (strain MDR-ZJ06).